The sequence spans 392 residues: Galactokinase (392 aa).

37–40 (EHTD) lines the substrate pocket. ATP is bound by residues Ser71 and 128 to 134 (GSGLSSS). Mg(2+) is bound by residues Ser134 and Glu166. Asp178 (proton acceptor) is an active-site residue. Residue Tyr228 participates in substrate binding.

The protein belongs to the GHMP kinase family. GalK subfamily.

The protein localises to the cytoplasm. The catalysed reaction is alpha-D-galactose + ATP = alpha-D-galactose 1-phosphate + ADP + H(+). Its pathway is carbohydrate metabolism; galactose metabolism. Functionally, catalyzes the transfer of the gamma-phosphate of ATP to D-galactose to form alpha-D-galactose-1-phosphate (Gal-1-P). The sequence is that of Galactokinase from Streptococcus pneumoniae (strain ATCC BAA-255 / R6).